A 479-amino-acid polypeptide reads, in one-letter code: Bifunctional protein HldE (479 aa).

Positions 1 to 322 (MLAETQLAPI…AALERTAAQI (322 aa)) are ribokinase. Residue 198-201 (NRRE) coordinates ATP. Aspartate 267 is a catalytic residue. Positions 350-479 (FTNGCFDLVH…TSSLVAKART (130 aa)) are cytidylyltransferase.

It in the N-terminal section; belongs to the carbohydrate kinase PfkB family. In the C-terminal section; belongs to the cytidylyltransferase family. As to quaternary structure, homodimer.

It carries out the reaction D-glycero-beta-D-manno-heptose 7-phosphate + ATP = D-glycero-beta-D-manno-heptose 1,7-bisphosphate + ADP + H(+). The catalysed reaction is D-glycero-beta-D-manno-heptose 1-phosphate + ATP + H(+) = ADP-D-glycero-beta-D-manno-heptose + diphosphate. It participates in nucleotide-sugar biosynthesis; ADP-L-glycero-beta-D-manno-heptose biosynthesis; ADP-L-glycero-beta-D-manno-heptose from D-glycero-beta-D-manno-heptose 7-phosphate: step 1/4. Its pathway is nucleotide-sugar biosynthesis; ADP-L-glycero-beta-D-manno-heptose biosynthesis; ADP-L-glycero-beta-D-manno-heptose from D-glycero-beta-D-manno-heptose 7-phosphate: step 3/4. Its function is as follows. Catalyzes the phosphorylation of D-glycero-D-manno-heptose 7-phosphate at the C-1 position to selectively form D-glycero-beta-D-manno-heptose-1,7-bisphosphate. Functionally, catalyzes the ADP transfer from ATP to D-glycero-beta-D-manno-heptose 1-phosphate, yielding ADP-D-glycero-beta-D-manno-heptose. In Azorhizobium caulinodans (strain ATCC 43989 / DSM 5975 / JCM 20966 / LMG 6465 / NBRC 14845 / NCIMB 13405 / ORS 571), this protein is Bifunctional protein HldE.